The primary structure comprises 263 residues: Putative replication protein PDa0002 (263 aa).

This Xylella fastidiosa (strain Temecula1 / ATCC 700964) protein is Putative replication protein PDa0002.